The following is a 102-amino-acid chain: MFAIIETGGKQVKVEEGQEIFVEKLDVNEGDSFTFDKVLFVGGDAVKVGAPTVEGASVTATVQKQGRGKKITVFTYKRRKDSKRKKGHRQPYTKLTIDKINA.

Residues R79–P91 are compositionally biased toward basic residues. The disordered stretch occupies residues R79–A102.

It belongs to the bacterial ribosomal protein bL21 family. As to quaternary structure, part of the 50S ribosomal subunit. Contacts protein L20.

In terms of biological role, this protein binds to 23S rRNA in the presence of protein L20. The polypeptide is Large ribosomal subunit protein bL21 (Staphylococcus saprophyticus subsp. saprophyticus (strain ATCC 15305 / DSM 20229 / NCIMB 8711 / NCTC 7292 / S-41)).